Consider the following 261-residue polypeptide: Putative methyltransferase MJ0046 (261 aa).

This sequence belongs to the methyltransferase superfamily.

The protein is Putative methyltransferase MJ0046 of Methanocaldococcus jannaschii (strain ATCC 43067 / DSM 2661 / JAL-1 / JCM 10045 / NBRC 100440) (Methanococcus jannaschii).